Consider the following 320-residue polypeptide: Acetyl-coenzyme A carboxylase carboxyl transferase subunit alpha (320 aa).

Residues Ala33 to Ala294 enclose the CoA carboxyltransferase C-terminal domain.

The protein belongs to the AccA family. Acetyl-CoA carboxylase is a heterohexamer composed of biotin carboxyl carrier protein (AccB), biotin carboxylase (AccC) and two subunits each of ACCase subunit alpha (AccA) and ACCase subunit beta (AccD).

It localises to the cytoplasm. It carries out the reaction N(6)-carboxybiotinyl-L-lysyl-[protein] + acetyl-CoA = N(6)-biotinyl-L-lysyl-[protein] + malonyl-CoA. It participates in lipid metabolism; malonyl-CoA biosynthesis; malonyl-CoA from acetyl-CoA: step 1/1. In terms of biological role, component of the acetyl coenzyme A carboxylase (ACC) complex. First, biotin carboxylase catalyzes the carboxylation of biotin on its carrier protein (BCCP) and then the CO(2) group is transferred by the carboxyltransferase to acetyl-CoA to form malonyl-CoA. The polypeptide is Acetyl-coenzyme A carboxylase carboxyl transferase subunit alpha (Caulobacter sp. (strain K31)).